The sequence spans 273 residues: Large ribosomal subunit protein uL2cz/uL2cy (273 aa).

2 disordered regions span residues 1 to 23 (MAIH…SQVK) and 223 to 273 (NPVD…RRSK).

The protein belongs to the universal ribosomal protein uL2 family. As to quaternary structure, part of the 50S ribosomal subunit.

Its subcellular location is the plastid. It is found in the chloroplast. The polypeptide is Large ribosomal subunit protein uL2cz/uL2cy (rpl2-A) (Oenothera argillicola (Appalachian evening primrose)).